A 316-amino-acid chain; its full sequence is Probable cell division protein WhiA (316 aa).

Residues 275–309 (TLKELGEMVSGGKISKSGINHRLRKIDDIAEKLRA) constitute a DNA-binding region (H-T-H motif).

Belongs to the WhiA family.

Involved in cell division and chromosome segregation. The protein is Probable cell division protein WhiA of Bacillus anthracis (strain CDC 684 / NRRL 3495).